We begin with the raw amino-acid sequence, 693 residues long: Elongation factor G (693 aa).

In terms of domain architecture, tr-type G spans 8–282; that stretch reads EKTRNIGIMA…AVIDYLPSPL (275 aa). GTP is bound by residues 17 to 24, 81 to 85, and 135 to 138; these read AHVDAGKT, DTPGH, and NKMD.

It belongs to the TRAFAC class translation factor GTPase superfamily. Classic translation factor GTPase family. EF-G/EF-2 subfamily.

It localises to the cytoplasm. In terms of biological role, catalyzes the GTP-dependent ribosomal translocation step during translation elongation. During this step, the ribosome changes from the pre-translocational (PRE) to the post-translocational (POST) state as the newly formed A-site-bound peptidyl-tRNA and P-site-bound deacylated tRNA move to the P and E sites, respectively. Catalyzes the coordinated movement of the two tRNA molecules, the mRNA and conformational changes in the ribosome. This chain is Elongation factor G, found in Streptococcus pneumoniae (strain Hungary19A-6).